Here is a 350-residue protein sequence, read N- to C-terminus: Sterol-4-alpha-carboxylate 3-dehydrogenase ERG26, decarboxylating (350 aa).

Residues 12–18 (GGSGFLG), 63–64 (DL), and 85–87 (SAS) contribute to the NADP(+) site. The substrate site is built by Ser125 and Tyr152. Residues Tyr152, Lys156, and 179 to 182 (PAGI) contribute to the NADP(+) site. Lys156 acts as the Proton donor in catalysis.

This sequence belongs to the 3-beta-HSD family. As to quaternary structure, heterotetramer of ERG25, ERG26, ERG27 and ERG28. ERG28 acts as a scaffold to tether ERG27 and other 4,4-demethylation-related enzymes, forming a demethylation enzyme complex, in the endoplasmic reticulum.

It is found in the endoplasmic reticulum membrane. The enzyme catalyses 4beta-methylzymosterol-4alpha-carboxylate + NADP(+) = 3-dehydro-4-methylzymosterol + CO2 + NADPH. It functions in the pathway steroid biosynthesis; zymosterol biosynthesis; zymosterol from lanosterol: step 4/6. Sterol-4-alpha-carboxylate 3-dehydrogenase; part of the third module of ergosterol biosynthesis pathway that includes the late steps of the pathway. ERG26 is a catalytic component of the C-4 demethylation complex that catalyzes the oxidative decarboxylation that results in a reduction of the 3-beta-hydroxy group at the C-3 carbon to an oxo group. The third module or late pathway involves the ergosterol synthesis itself through consecutive reactions that mainly occur in the endoplasmic reticulum (ER) membrane. Firstly, the squalene synthase ERG9 catalyzes the condensation of 2 farnesyl pyrophosphate moieties to form squalene, which is the precursor of all steroids. Squalene synthase is crucial for balancing the incorporation of farnesyl diphosphate (FPP) into sterol and nonsterol isoprene synthesis. Secondly, the squalene epoxidase ERG1 catalyzes the stereospecific oxidation of squalene to (S)-2,3-epoxysqualene, which is considered to be a rate-limiting enzyme in steroid biosynthesis. Then, the lanosterol synthase ERG7 catalyzes the cyclization of (S)-2,3 oxidosqualene to lanosterol, a reaction that forms the sterol core. In the next steps, lanosterol is transformed to zymosterol through a complex process involving various demethylation, reduction and desaturation reactions. The lanosterol 14-alpha-demethylase ERG11 (also known as CYP51) catalyzes C14-demethylation of lanosterol to produce 4,4'-dimethyl cholesta-8,14,24-triene-3-beta-ol, which is critical for ergosterol biosynthesis. The C-14 reductase ERG24 reduces the C14=C15 double bond of 4,4-dimethyl-cholesta-8,14,24-trienol to produce 4,4-dimethyl-cholesta-8,24-dienol. 4,4-dimethyl-cholesta-8,24-dienol is substrate of the C-4 demethylation complex ERG25-ERG26-ERG27 in which ERG25 catalyzes the three-step monooxygenation required for the demethylation of 4,4-dimethyl and 4alpha-methylsterols, ERG26 catalyzes the oxidative decarboxylation that results in a reduction of the 3-beta-hydroxy group at the C-3 carbon to an oxo group, and ERG27 is responsible for the reduction of the keto group on the C-3. ERG28 has a role as a scaffold to help anchor ERG25, ERG26 and ERG27 to the endoplasmic reticulum and ERG29 regulates the activity of the iron-containing C4-methylsterol oxidase ERG25. Then, the sterol 24-C-methyltransferase ERG6 catalyzes the methyl transfer from S-adenosyl-methionine to the C-24 of zymosterol to form fecosterol. The C-8 sterol isomerase ERG2 catalyzes the reaction which results in unsaturation at C-7 in the B ring of sterols and thus converts fecosterol to episterol. The sterol-C5-desaturase ERG3 then catalyzes the introduction of a C-5 double bond in the B ring to produce 5-dehydroepisterol. The C-22 sterol desaturase ERG5 further converts 5-dehydroepisterol into ergosta-5,7,22,24(28)-tetraen-3beta-ol by forming the C-22(23) double bond in the sterol side chain. Finally, ergosta-5,7,22,24(28)-tetraen-3beta-ol is substrate of the C-24(28) sterol reductase ERG4 to produce ergosterol. This is Sterol-4-alpha-carboxylate 3-dehydrogenase ERG26, decarboxylating from Candida albicans (strain SC5314 / ATCC MYA-2876) (Yeast).